Here is a 347-residue protein sequence, read N- to C-terminus: Protein FAM50 homolog (347 aa).

Over residues 77–113 (EDIVREREKKLAQKKEEKDREKLKALEAKQAEKDRQR) the composition is skewed to basic and acidic residues. The interval 77 to 142 (EDIVREREKK…EDEEEPLEIK (66 aa)) is disordered. The segment covering 123-138 (PEEDEESFDDEDEEEP) has biased composition (acidic residues).

The protein belongs to the FAM50 family.

The polypeptide is Protein FAM50 homolog (Aedes aegypti (Yellowfever mosquito)).